Here is a 142-residue protein sequence, read N- to C-terminus: Hemoglobin subunit alpha-1 (142 aa).

In terms of domain architecture, Globin spans 2–142 (KLTAEDKHNV…VAYVLASKYR (141 aa)). O2 is bound at residue His-59. His-88 lines the heme b pocket.

Belongs to the globin family. Major hemoglobin is a heterotetramer of two alpha-1 chains and two beta-1 chains. As to expression, red blood cells.

In terms of biological role, involved in oxygen transport from the lung to the various peripheral tissues. The chain is Hemoglobin subunit alpha-1 from Pleurodeles waltl (Iberian ribbed newt).